The following is a 451-amino-acid chain: Protein NINJA homolog 1 (451 aa).

Disordered regions lie at residues 1–223 (MDDE…QGNP), 321–346 (ISQA…DDKK), and 427–451 (DAPG…SAQN). Positions 23 to 35 (KARDAPLEPKAEP) are enriched in basic and acidic residues. Composition is skewed to polar residues over residues 38–49 (EESSSKGVSQTP), 86–103 (PGSS…QKPV), and 143–153 (ISISTDDGSTG). The segment covering 154-163 (ENEDVAESEA) has biased composition (acidic residues). A compositionally biased stretch (low complexity) spans 207–216 (SFSGSESSSG).

It belongs to the Ninja family. As to quaternary structure, interacts with TIFY10C/JAZ8. Interacts with TIFY11A/JAZ9.

It is found in the nucleus. The protein is Protein NINJA homolog 1 of Oryza sativa subsp. japonica (Rice).